The primary structure comprises 326 residues: Probable magnesium transporter NIPA7 (326 aa).

Over 1 to 4 (MVSD) the chain is Extracellular. A helical transmembrane segment spans residues 5 to 25 (NEMGLVLAVSSSVFIGSSFIL). Residues 26 to 51 (KKKGLKRAAANGTRAGFGGYTYLLEP) are Cytoplasmic-facing. The chain crosses the membrane as a helical span at residues 52 to 72 (LWWVGLVTMTFGEIANFVAYV). Residues 73 to 76 (YAPA) lie on the Extracellular side of the membrane. Residues 77–97 (VLVTPLGALSIIISAVLAHFL) form a helical membrane-spanning segment. The Cytoplasmic segment spans residues 98–104 (LDEKLRK). Residues 105 to 125 (MGVWGCVCCIVGSVMIVIHAP) form a helical membrane-spanning segment. Residues 126–142 (QEQTPNSVEEIWKLAMQ) lie on the Extracellular side of the membrane. A helical membrane pass occupies residues 143–163 (PAFLIYVAISMSIVLALILYC). Over 164-169 (EPLCGQ) the chain is Cytoplasmic. A helical transmembrane segment spans residues 170-190 (TNILVYIGICSLMGSLTVMSI). Residues 191-209 (KAVGIAIKLTFEGINQIWY) lie on the Extracellular side of the membrane. The chain crosses the membrane as a helical span at residues 210–230 (PETWFFAMVAAICVVMQMIYL). The Cytoplasmic segment spans residues 231–240 (NKALDTFNAA). The chain crosses the membrane as a helical span at residues 241–261 (IVSPIYYVMFTTLTIVASAIM). Over 262 to 272 (FKDWNGQNTDS) the chain is Extracellular. The helical transmembrane segment at 273 to 293 (IASEICGFITVLTGTVILHST) threads the bilayer. Residues 294–326 (REEEQASPRRMRWQDSGKSFDEEHLTSLYSPEY) lie on the Cytoplasmic side of the membrane.

It belongs to the NIPA (TC 2.A.7) family. As to quaternary structure, homodimer.

Its subcellular location is the cell membrane. The protein resides in the early endosome. Functionally, acts as a Mg(2+) transporter. Can also transport other divalent cations such as Fe(2+), Sr(2+), Ba(2+), Mn(2+) and Co(2+) but to a much less extent than Mg(2+). The protein is Probable magnesium transporter NIPA7 of Arabidopsis thaliana (Mouse-ear cress).